A 130-amino-acid polypeptide reads, in one-letter code: MNLIAKLEQEEIERALAGKTIPEFAPGDTVIVNVNVVEGNRKRVQAYEGVVIAIRSRGLNSNFIVRKISSGEGVERTFQTYSPLLASIVVKRRGDVRRAKLYYLRERSGKSARIKEKLVSKDRTAAASQE.

It belongs to the bacterial ribosomal protein bL19 family.

Functionally, this protein is located at the 30S-50S ribosomal subunit interface and may play a role in the structure and function of the aminoacyl-tRNA binding site. The protein is Large ribosomal subunit protein bL19 of Burkholderia lata (strain ATCC 17760 / DSM 23089 / LMG 22485 / NCIMB 9086 / R18194 / 383).